The following is a 332-amino-acid chain: Melanocortin receptor 4 (332 aa).

Residues 1–43 (MNSTLQHGMHTSLHFWNRSTYGQHSNATESLGKGYPDGGCYEQ) are Extracellular-facing. 3 N-linked (GlcNAc...) asparagine glycosylation sites follow: asparagine 2, asparagine 17, and asparagine 26. Intrachain disulfides connect cysteine 40–cysteine 279 and cysteine 271–cysteine 277. Residues 44–69 (LFVSPEVFVTLGVISLLENILVIVAI) traverse the membrane as a helical segment. Topologically, residues 70–81 (AKNKNLHSPMYF) are cytoplasmic. Residues 82 to 106 (FICSLAVADMLVSVSNGSETIVITL) form a helical membrane-spanning segment. Positions 100, 122, and 126 each coordinate Ca(2+). The Extracellular portion of the chain corresponds to 107-123 (LNSTDTDAQSFTVNIDN). Residues 124–145 (VIDSVICSSLLASICSLLSIAV) form a helical membrane-spanning segment. Topologically, residues 146–165 (DRYFTIFYALQYHNIMTVRR) are cytoplasmic. The chain crosses the membrane as a helical span at residues 166-186 (VGIIISCIWAACTVSGILFII). Residues 187 to 191 (YSDST) are Extracellular-facing. The chain crosses the membrane as a helical span at residues 192-215 (AVIICLITMFFTMLALMASLYVHM). Residues 216–248 (FLMARLHIKRIAVLPGTGTIRQGANMKGAITLT) are Cytoplasmic-facing. The helical transmembrane segment at 249–271 (ILIGVFVVCWAPFFLHLIFYISC) threads the bilayer. The Extracellular portion of the chain corresponds to 272–280 (PQNPYCVCF). Residues 281–304 (MSHFNLYLILIMCNSIIDPLIYAL) form a helical membrane-spanning segment. Topologically, residues 305–332 (RSQELRKTFKEIICCYPLGGLCDLSSRY) are cytoplasmic. Residue cysteine 318 is the site of S-palmitoyl cysteine attachment.

This sequence belongs to the G-protein coupled receptor 1 family. Homodimer; disulfide-linked, also forms higher order oligomers. Interacts with GNAS. Interacts with ATRNL1. Interacts with MGRN1; this interaction competes with GNAS-binding and thus inhibits agonist-induced cAMP production. Interacts with MRAP and MRAP2; these associated factors increase ligand-sensitivity and generation of cAMP.

Its subcellular location is the cell membrane. Functionally, hormone receptor that acts as a key component of the leptin-melanocortin pathway at the intersection of homeostatic maintenance of energetic state. Plays a role in regulating food intake: activation by a stimulating hormone such as anorexigenic alpha-melanocyte stimulating hormone (alpha-MSH) inhibits appetite, whereas binding to a natural antagonist like Agouti-related protein/AGRP promotes appetite. G-protein-coupled receptor that activates conventional Galphas signaling leading to induction of anorexogenic signaling in the hypothalamus to result in negative energy balance. Regulates the firing activity of neurons from the hypothalamus by alpha-MSH and AGRP independently of Galphas signaling by ligand-induced coupling of closure of inwardly rectifying potassium channel KCNJ13. In intestinal epithelial cells, plays a role in the inhibition of hepatic glucose production via nesfatin-1/NUCB2 leading to increased cyclic adenosine monophosphate (cAMP) levels and glucagon-like peptide 1 (GLP-1) secretion in the intestinal epithelium. The sequence is that of Melanocortin receptor 4 (MC4R) from Vulpes vulpes (Red fox).